A 44-amino-acid chain; its full sequence is U17-ctenitoxin-Co1a (44 aa).

4 cysteine pairs are disulfide-bonded: Cys3/Cys20, Cys10/Cys26, Cys19/Cys40, and Cys28/Cys38.

Expressed by the venom gland.

The protein resides in the secreted. In terms of biological role, omega-agatoxins are antagonists of voltage-sensitive calcium channels (Cav). Toxic to mice by intracerebroventricular injection. The polypeptide is U17-ctenitoxin-Co1a (Ctenus ornatus (Brazilian spider)).